A 274-amino-acid chain; its full sequence is Glutamate racemase (274 aa).

Substrate is bound by residues 9–10 (DS) and 41–42 (YG). Cys-73 serves as the catalytic Proton donor/acceptor. 74–75 (NT) contributes to the substrate binding site. Residue Cys-183 is the Proton donor/acceptor of the active site. A substrate-binding site is contributed by 184–185 (TH).

The protein belongs to the aspartate/glutamate racemases family.

It carries out the reaction L-glutamate = D-glutamate. Its pathway is cell wall biogenesis; peptidoglycan biosynthesis. In terms of biological role, provides the (R)-glutamate required for cell wall biosynthesis. This Shewanella baltica (strain OS155 / ATCC BAA-1091) protein is Glutamate racemase.